We begin with the raw amino-acid sequence, 197 residues long: Penicillin-binding protein activator LpoB (197 aa).

The signal sequence occupies residues 1-17 (MIKRMSGIALAALLLSG). The N-palmitoyl cysteine moiety is linked to residue Cys18. Cys18 is lipidated: S-diacylglycerol cysteine. Residues 23-57 (PRGETPSQPPAPTTPAKPSVVPTPTPPVVTPVPQP) form a disordered region. A compositionally biased stretch (pro residues) spans 29–57 (SQPPAPTTPAKPSVVPTPTPPVVTPVPQP).

It belongs to the LpoB family. Interacts with PBP1b.

The protein localises to the cell outer membrane. In terms of biological role, regulator of peptidoglycan synthesis that is essential for the function of penicillin-binding protein 1B (PBP1b). This Edwardsiella piscicida protein is Penicillin-binding protein activator LpoB.